We begin with the raw amino-acid sequence, 205 residues long: Adenylyl-sulfate kinase (205 aa).

31–38 (GLSGAGKS) is an ATP binding site. The active-site Phosphoserine intermediate is the Ser105.

It belongs to the APS kinase family.

It catalyses the reaction adenosine 5'-phosphosulfate + ATP = 3'-phosphoadenylyl sulfate + ADP + H(+). It functions in the pathway sulfur metabolism; hydrogen sulfide biosynthesis; sulfite from sulfate: step 2/3. Functionally, catalyzes the synthesis of activated sulfate. The polypeptide is Adenylyl-sulfate kinase (Shewanella sp. (strain ANA-3)).